The following is a 274-amino-acid chain: 2-dehydro-3-deoxyphosphooctonate aldolase (274 aa).

This sequence belongs to the KdsA family.

It localises to the cytoplasm. The enzyme catalyses D-arabinose 5-phosphate + phosphoenolpyruvate + H2O = 3-deoxy-alpha-D-manno-2-octulosonate-8-phosphate + phosphate. Its pathway is carbohydrate biosynthesis; 3-deoxy-D-manno-octulosonate biosynthesis; 3-deoxy-D-manno-octulosonate from D-ribulose 5-phosphate: step 2/3. It participates in bacterial outer membrane biogenesis; lipopolysaccharide biosynthesis. This is 2-dehydro-3-deoxyphosphooctonate aldolase from Legionella pneumophila (strain Lens).